We begin with the raw amino-acid sequence, 462 residues long: Chromosomal replication initiator protein DnaA (462 aa).

Residues 1-83 are domain I, interacts with DnaA modulators; it reads MSLSLWQQCL…LRFEVGSKPA (83 aa). The interval 83–125 is domain II; that stretch reads AARAHNNPVTASVSAPVAPVTRSAPMRPSWDNSPAQPELSYRS. Residues 104 to 125 are disordered; it reads RSAPMRPSWDNSPAQPELSYRS. Polar residues predominate over residues 112–125; it reads WDNSPAQPELSYRS. Positions 126–342 are domain III, AAA+ region; it reads NVNPKHTFDN…GALNRVIANA (217 aa). 4 residues coordinate ATP: glycine 170, glycine 172, lysine 173, and threonine 174. Residues 343–462 are domain IV, binds dsDNA; that stretch reads NFTGRAITID…FSNLIRTLSS (120 aa).

This sequence belongs to the DnaA family. As to quaternary structure, oligomerizes as a right-handed, spiral filament on DNA at oriC.

It is found in the cytoplasm. In terms of biological role, plays an essential role in the initiation and regulation of chromosomal replication. ATP-DnaA binds to the origin of replication (oriC) to initiate formation of the DNA replication initiation complex once per cell cycle. Binds the DnaA box (a 9 base pair repeat at the origin) and separates the double-stranded (ds)DNA. Forms a right-handed helical filament on oriC DNA; dsDNA binds to the exterior of the filament while single-stranded (ss)DNA is stabiized in the filament's interior. The ATP-DnaA-oriC complex binds and stabilizes one strand of the AT-rich DNA unwinding element (DUE), permitting loading of DNA polymerase. After initiation quickly degrades to an ADP-DnaA complex that is not apt for DNA replication. Binds acidic phospholipids. The protein is Chromosomal replication initiator protein DnaA of Yersinia pseudotuberculosis serotype O:1b (strain IP 31758).